Consider the following 388-residue polypeptide: Chorismate synthase (388 aa).

Residues arginine 39 and arginine 45 each contribute to the NADP(+) site. FMN is bound by residues 130-132 (RSS), 251-252 (NA), glycine 296, 311-315 (KPIPT), and arginine 337.

The protein belongs to the chorismate synthase family. Homotetramer. FMNH2 serves as cofactor.

The catalysed reaction is 5-O-(1-carboxyvinyl)-3-phosphoshikimate = chorismate + phosphate. It functions in the pathway metabolic intermediate biosynthesis; chorismate biosynthesis; chorismate from D-erythrose 4-phosphate and phosphoenolpyruvate: step 7/7. Functionally, catalyzes the anti-1,4-elimination of the C-3 phosphate and the C-6 proR hydrogen from 5-enolpyruvylshikimate-3-phosphate (EPSP) to yield chorismate, which is the branch point compound that serves as the starting substrate for the three terminal pathways of aromatic amino acid biosynthesis. This reaction introduces a second double bond into the aromatic ring system. This is Chorismate synthase from Streptococcus agalactiae serotype V (strain ATCC BAA-611 / 2603 V/R).